Here is a 506-residue protein sequence, read N- to C-terminus: GTPase Der (506 aa).

2 consecutive EngA-type G domains span residues proline 3–leucine 166 and isoleucine 218–threonine 391. Residues glycine 9–serine 16, aspartate 56–isoleucine 60, asparagine 118–aspartate 121, glycine 224–serine 231, aspartate 271–valine 275, and asparagine 336–aspartate 339 contribute to the GTP site. In terms of domain architecture, KH-like spans glutamine 392–asparagine 476.

This sequence belongs to the TRAFAC class TrmE-Era-EngA-EngB-Septin-like GTPase superfamily. EngA (Der) GTPase family. In terms of assembly, associates with the 50S ribosomal subunit.

Functionally, GTPase that plays an essential role in the late steps of ribosome biogenesis. The protein is GTPase Der of Actinobacillus pleuropneumoniae serotype 7 (strain AP76).